A 285-amino-acid polypeptide reads, in one-letter code: Undecaprenyl-diphosphatase (285 aa).

Transmembrane regions (helical) follow at residues 40–60, 89–109, 137–157, 171–191, 209–229, 241–261, and 265–285; these read GPLI…VYFF, LFWW…AIKL, DLIA…DWLG, GLIV…RSGV, FSFL…VPEI, LIAG…LMNF, and ASML…LAFF.

Belongs to the UppP family.

Its subcellular location is the cell inner membrane. The catalysed reaction is di-trans,octa-cis-undecaprenyl diphosphate + H2O = di-trans,octa-cis-undecaprenyl phosphate + phosphate + H(+). In terms of biological role, catalyzes the dephosphorylation of undecaprenyl diphosphate (UPP). Confers resistance to bacitracin. The polypeptide is Undecaprenyl-diphosphatase (Erythrobacter litoralis (strain HTCC2594)).